A 585-amino-acid chain; its full sequence is Zinc finger protein 732 (585 aa).

One can recognise a KRAB domain in the interval 4–75; it reads LTFRDVAIEF…KIHETVAKHP (72 aa). The segment at 141–163 adopts a C2H2-type 1; degenerate zinc-finger fold; that stretch reads FQCNVHVKVFSTFSNSNQRRIRH. Residues 167-189 form a C2H2-type 2; degenerate zinc finger; it reads KHFKECGKSFQKFSDLTQHQGIH. The C2H2-type 3; degenerate zinc finger occupies 195-217; the sequence is YTCEECGKDFKWYLIFNEYEIIH. Residues 223-244 form a C2H2-type 4 zinc finger; it reads FTCEECGNIFTTSSNFAKHKVH. A C2H2-type 5; degenerate zinc finger spans residues 250–272; it reads YKYEECGKAFNRSSTLTKHKRIH. C2H2-type zinc fingers lie at residues 278 to 300, 306 to 328, 334 to 356, 362 to 384, 390 to 412, 418 to 440, 446 to 468, 474 to 496, and 502 to 524; these read FTCE…KKIH, YKCQ…NRIH, YTCE…KRIH, YKCE…KSIH, HKCE…KIIH, YKCE…KKIH, YRCE…KTIH, and YECE…KKIH. The segment at 530 to 552 adopts a C2H2-type 15; degenerate zinc-finger fold; it reads YRCEECGKAFRRSRVLNKYKTIH. Residues 558–580 form a C2H2-type 16; degenerate zinc finger; the sequence is PKCKGCGKAFKWSSYLNQHNKIY.

Belongs to the krueppel C2H2-type zinc-finger protein family.

The protein localises to the nucleus. May be involved in transcriptional regulation. The sequence is that of Zinc finger protein 732 (ZNF732) from Homo sapiens (Human).